The chain runs to 530 residues: Hyalin (530 aa).

7 HYR domains span residues 1-66, 67-150, 151-234, 235-319, 320-403, 404-486, and 487-530; these read NVEI…TVTA, TDSI…NVVE, VDTT…NVVE, VDTT…NIVE, EDTT…TVNT, and VDTT…ASLV.

Homooligomer in presence of calcium. Glycosylated.

It localises to the secreted. Its subcellular location is the extracellular space. The protein resides in the extracellular matrix. Major constituent of the hyaline layer. The hyaline layer of echinoderm embryos is an extraembryonic matrix that functions as a substrate for cell adhesion through early development. This is Hyalin from Lytechinus variegatus (Green sea urchin).